A 261-amino-acid polypeptide reads, in one-letter code: Cytochrome c oxidase subunit 3 (261 aa).

Over 1-15 (MTHQTHAYHMVNPSP) the chain is Mitochondrial matrix. Residues 16–34 (WPLTGALSALLLTSGLIMW) form a helical membrane-spanning segment. Topologically, residues 35-40 (FHFNSF) are mitochondrial intermembrane. A helical transmembrane segment spans residues 41–66 (LLVIIGLTCMLLTMYQWWRDIVREGT). Over 67–72 (FQGHHT) the chain is Mitochondrial matrix. A helical membrane pass occupies residues 73-105 (PVVQKGLRYGMVLFIVSEVFFFLGFFWAFYHSS). Residues 106 to 128 (LAPTPELGGCWPPTGIHPLNPLE) are Mitochondrial intermembrane-facing. A helical transmembrane segment spans residues 129–152 (VPLLNTSILLASGVSITWAHHSLM). The Mitochondrial matrix segment spans residues 153 to 155 (EGN). A helical membrane pass occupies residues 156–183 (RKQMIQALSITILLGIYFTILQASEYYE). At 184-190 (SSFTISD) the chain is on the mitochondrial intermembrane side. Residues 191–223 (GVYGSTFFVATGFHGLHVIIGTTFLIVCLLRQF) form a helical membrane-spanning segment. Over 224-232 (NFHFTSTHH) the chain is Mitochondrial matrix. The helical transmembrane segment at 233–256 (FGFEAAAWYWHFVDVVWLFLYVSI) threads the bilayer. The Mitochondrial intermembrane portion of the chain corresponds to 257 to 261 (YWWGS).

This sequence belongs to the cytochrome c oxidase subunit 3 family. As to quaternary structure, component of the cytochrome c oxidase (complex IV, CIV), a multisubunit enzyme composed of 14 subunits. The complex is composed of a catalytic core of 3 subunits MT-CO1, MT-CO2 and MT-CO3, encoded in the mitochondrial DNA, and 11 supernumerary subunits COX4I, COX5A, COX5B, COX6A, COX6B, COX6C, COX7A, COX7B, COX7C, COX8 and NDUFA4, which are encoded in the nuclear genome. The complex exists as a monomer or a dimer and forms supercomplexes (SCs) in the inner mitochondrial membrane with NADH-ubiquinone oxidoreductase (complex I, CI) and ubiquinol-cytochrome c oxidoreductase (cytochrome b-c1 complex, complex III, CIII), resulting in different assemblies (supercomplex SCI(1)III(2)IV(1) and megacomplex MCI(2)III(2)IV(2)).

It is found in the mitochondrion inner membrane. It carries out the reaction 4 Fe(II)-[cytochrome c] + O2 + 8 H(+)(in) = 4 Fe(III)-[cytochrome c] + 2 H2O + 4 H(+)(out). Component of the cytochrome c oxidase, the last enzyme in the mitochondrial electron transport chain which drives oxidative phosphorylation. The respiratory chain contains 3 multisubunit complexes succinate dehydrogenase (complex II, CII), ubiquinol-cytochrome c oxidoreductase (cytochrome b-c1 complex, complex III, CIII) and cytochrome c oxidase (complex IV, CIV), that cooperate to transfer electrons derived from NADH and succinate to molecular oxygen, creating an electrochemical gradient over the inner membrane that drives transmembrane transport and the ATP synthase. Cytochrome c oxidase is the component of the respiratory chain that catalyzes the reduction of oxygen to water. Electrons originating from reduced cytochrome c in the intermembrane space (IMS) are transferred via the dinuclear copper A center (CU(A)) of subunit 2 and heme A of subunit 1 to the active site in subunit 1, a binuclear center (BNC) formed by heme A3 and copper B (CU(B)). The BNC reduces molecular oxygen to 2 water molecules using 4 electrons from cytochrome c in the IMS and 4 protons from the mitochondrial matrix. In Osphranter robustus (Wallaroo), this protein is Cytochrome c oxidase subunit 3 (MT-CO3).